We begin with the raw amino-acid sequence, 410 residues long: Cytochrome P450 (410 aa).

Cys359 contributes to the heme binding site.

This sequence belongs to the cytochrome P450 family. Heme serves as cofactor.

The protein is Cytochrome P450 (cypA) of Bacillus subtilis (strain 168).